We begin with the raw amino-acid sequence, 199 residues long: CASP-like protein 4B1 (199 aa).

Residues M1–D32 form a disordered region. Topologically, residues M1–G53 are cytoplasmic. The span at P14–P28 shows a compositional bias: pro residues. A helical transmembrane segment spans residues I54–A74. The Extracellular portion of the chain corresponds to S75–R91. The helical transmembrane segment at Y92–F112 threads the bilayer. At R113–D127 the chain is on the cytoplasmic side. The chain crosses the membrane as a helical span at residues F128–I148. Over T149–V163 the chain is Extracellular. The chain crosses the membrane as a helical span at residues V164 to I184. The Cytoplasmic segment spans residues A185–Y199.

Belongs to the Casparian strip membrane proteins (CASP) family. As to quaternary structure, homodimer and heterodimers.

Its subcellular location is the cell membrane. This chain is CASP-like protein 4B1, found in Oryza sativa subsp. japonica (Rice).